The following is a 269-amino-acid chain: tRNA pseudouridine synthase A (269 aa).

The active-site Nucleophile is Asp51. Position 109 (Tyr109) interacts with substrate.

This sequence belongs to the tRNA pseudouridine synthase TruA family. Homodimer.

It catalyses the reaction uridine(38/39/40) in tRNA = pseudouridine(38/39/40) in tRNA. Formation of pseudouridine at positions 38, 39 and 40 in the anticodon stem and loop of transfer RNAs. In Haemophilus influenzae (strain ATCC 51907 / DSM 11121 / KW20 / Rd), this protein is tRNA pseudouridine synthase A.